The chain runs to 261 residues: Enolase-phosphatase E1 (261 aa).

Residues aspartate 16 and glutamate 18 each contribute to the Mg(2+) site. Residues 150-151 (SS) and lysine 184 contribute to the substrate site. Aspartate 209 provides a ligand contact to Mg(2+).

Belongs to the HAD-like hydrolase superfamily. MasA/MtnC family. In terms of assembly, monomer. Requires Mg(2+) as cofactor.

It is found in the cytoplasm. Its subcellular location is the nucleus. The catalysed reaction is 5-methylsulfanyl-2,3-dioxopentyl phosphate + H2O = 1,2-dihydroxy-5-(methylsulfanyl)pent-1-en-3-one + phosphate. The protein operates within amino-acid biosynthesis; L-methionine biosynthesis via salvage pathway; L-methionine from S-methyl-5-thio-alpha-D-ribose 1-phosphate: step 3/6. It functions in the pathway amino-acid biosynthesis; L-methionine biosynthesis via salvage pathway; L-methionine from S-methyl-5-thio-alpha-D-ribose 1-phosphate: step 4/6. Functionally, bifunctional enzyme that catalyzes the enolization of 2,3-diketo-5-methylthiopentyl-1-phosphate (DK-MTP-1-P) into the intermediate 2-hydroxy-3-keto-5-methylthiopentenyl-1-phosphate (HK-MTPenyl-1-P), which is then dephosphorylated to form the acireductone 1,2-dihydroxy-3-keto-5-methylthiopentene (DHK-MTPene). This chain is Enolase-phosphatase E1 (Enoph1), found in Rattus norvegicus (Rat).